The following is a 708-amino-acid chain: Solute carrier family 15 member 1 (708 aa).

Residues 1 to 21 (MGMSKSHSFFGYPLSIFFIVV) traverse the membrane as a helical segment. Residues 22-53 (NEFCERFSYYGMRAILILYFTNFISWDDNLST) are Extracellular-facing. A glycan (N-linked (GlcNAc...) asparagine) is linked at asparagine 50. Residues 54 to 74 (AIYHTFVALCYLTPILGALIA) form a helical membrane-spanning segment. Residues 75–82 (DSWLGKFK) lie on the Cytoplasmic side of the membrane. Residues 83-103 (TIVSLSIVYTIGQAVTSVSSI) traverse the membrane as a helical segment. Residues 104–118 (NDLTDHNHDGTPDSL) lie on the Extracellular side of the membrane. A helical transmembrane segment spans residues 119 to 139 (PVHVVLSLIGLALIALGTGGI). At 140–161 (KPCVSAFGGDQFEEGQEKQRNR) the chain is on the cytoplasmic side. A helical membrane pass occupies residues 162–182 (FFSIFYLAINAGSLLSTIITP). Residues 183 to 198 (MLRVQQCGIHSKQACY) lie on the Extracellular side of the membrane. Residues 199–219 (PLAFGVPAALMAVALIVFVLG) form a helical membrane-spanning segment. Topologically, residues 220–276 (SGMYKKFKPQGNIMGKVAKCIGFAIKNRFRHRSKAFPKREHWLDWAKEKYDERLISQ) are cytoplasmic. A helical transmembrane segment spans residues 277 to 297 (IKMVTRVMFLYIPLPMFWALF). Over 298 to 327 (DQQGSRWTLQATTMSGKIGALEIQPDQMQT) the chain is Extracellular. The helical transmembrane segment at 328–348 (VNAILIVIMVPIFDAVLYPLI) threads the bilayer. Topologically, residues 349 to 361 (AKCGFNFTSLKKM) are cytoplasmic. Residues 362–382 (AVGMVLASMAFVVAAIVQVEI) form a helical membrane-spanning segment. Over 383 to 584 (DKTLPVFPKG…SANTVNMALQ (202 aa)) the chain is Extracellular. Positions 383–584 (DKTLPVFPKG…SANTVNMALQ (202 aa)) are extracellular domain (ECD). Residues asparagine 404, asparagine 408, asparagine 439, asparagine 509, asparagine 514, and asparagine 562 are each glycosylated (N-linked (GlcNAc...) asparagine). Residues 585–605 (IPQYFLLTCGEVVFSVTGLEF) traverse the membrane as a helical segment. Topologically, residues 606–619 (SYSQAPSNMKSVLQ) are cytoplasmic. Residues 620–640 (AGWLLTVAVGNIIVLIVAGAG) form a helical membrane-spanning segment. The Extracellular portion of the chain corresponds to 641 to 645 (QFSKQ). A helical membrane pass occupies residues 646–666 (WAEYILFAALLLVVCVIFAIM). Residues 667–708 (ARFYTYINPAEIEAQFDEDEKKNRLEKSNPYFMSGANSQKQM) are Cytoplasmic-facing.

It belongs to the major facilitator superfamily. Proton-dependent oligopeptide transporter (POT/PTR) (TC 2.A.17) family. Interacts (via extracellular domain region) with trypsin. In terms of tissue distribution, expressed in small intestine.

The protein localises to the apical cell membrane. It catalyses the reaction a dipeptide(out) + H(+)(out) = a dipeptide(in) + H(+)(in). The enzyme catalyses an L-amino acid tripeptide(out) + H(+)(out) = an L-amino acid tripeptide(in) + H(+)(in). The catalysed reaction is L-alanyl-L-lysine(out) + H(+)(out) = L-alanyl-L-lysine(in) + H(+)(in). It carries out the reaction L-alanyl-L-proline(out) + H(+)(out) = L-alanyl-L-proline(in) + H(+)(in). It catalyses the reaction L-alanyl-L-valine(out) + H(+)(out) = L-alanyl-L-valine(in) + H(+)(in). The enzyme catalyses carnosine(out) + H(+)(out) = carnosine(in) + H(+)(in). The catalysed reaction is glycyl-L-glutamine(out) + H(+)(out) = glycyl-L-glutamine(in) + H(+)(in). It carries out the reaction glycyl-L-leucine(out) + H(+)(out) = glycyl-L-leucine(in) + H(+)(in). It catalyses the reaction glycyl-L-proline(out) + H(+)(out) = glycyl-L-proline(in) + H(+)(in). The enzyme catalyses glycyl-sarcosine(out) + H(+)(out) = glycyl-sarcosine(in) + H(+)(in). The catalysed reaction is L-leucyl-L-leucine(out) + H(+)(out) = L-leucyl-L-leucine(in) + H(+)(in). It carries out the reaction L-leucyl-L-proline(out) + H(+)(out) = L-leucyl-L-proline(in) + H(+)(in). It catalyses the reaction L-phenylalanyl-L-leucine(out) + H(+)(out) = L-phenylalanyl-L-leucine(in) + H(+)(in). The enzyme catalyses L-phenylalanyl-L-phenylalanine(out) + H(+)(out) = L-phenylalanyl-L-phenylalanine(in) + H(+)(in). The catalysed reaction is L-lysyl-glycine(out) + H(+)(out) = L-lysyl-glycine(in) + H(+)(in). It carries out the reaction L-tyrosylglycine(out) + H(+)(out) = L-tyrosylglycine(in) + H(+)(in). It catalyses the reaction L-alanyl-L-aspartate(out) + 2 H(+)(out) = L-alanyl-L-aspartate(in) + 2 H(+)(in). The enzyme catalyses L-aspartyl-glycine(out) + 2 H(+)(out) = L-aspartyl-glycine(in) + 2 H(+)(in). The catalysed reaction is glycyl-L-aspartate(out) + 2 H(+)(out) = glycyl-L-aspartate(in) + 2 H(+)(in). It carries out the reaction glycyl-L-glutamate(out) + 2 H(+)(out) = glycyl-L-glutamate(in) + 2 H(+)(in). It catalyses the reaction L-alanyl-L-leucyl-L-alanine(out) + H(+)(out) = L-alanyl-L-leucyl-L-alanine(in) + H(+)(in). The enzyme catalyses L-alanyl-L-prolylglycine(out) + H(+)(out) = L-alanyl-L-prolylglycine(in) + H(+)(in). The catalysed reaction is glycylglycyl-L-isoleucine(out) + H(+)(out) = glycylglycyl-L-isoleucine(in) + H(+)(in). It carries out the reaction glycylglycyl-L-proline(out) + H(+)(out) = glycylglycyl-L-proline(in) + H(+)(in). It catalyses the reaction L-methionyl-L-phenylalanyl-L-methionine(out) + H(+)(out) = L-methionyl-L-phenylalanyl-L-methionine(in) + H(+)(in). The enzyme catalyses N-acetyl-D-muramoyl-L-alanyl-D-isoglutamine(out) + 2 H(+)(out) = N-acetyl-D-muramoyl-L-alanyl-D-isoglutamine(in) + 2 H(+)(in). The catalysed reaction is N(alpha)-formyl-L-methionyl-L-leucyl-L-phenylalanine(out) + 2 H(+)(out) = N(alpha)-formyl-L-methionyl-L-leucyl-L-phenylalanine(in) + 2 H(+)(in). Its function is as follows. Electrogenic proton-coupled amino-acid transporter that transports oligopeptides of 2 to 4 amino acids with a preference for dipeptides. Transports neutral and monovalently charged peptides with a proton to peptide stoichiometry of 1:1 or 2:1. Primarily responsible for the absorption of dietary di- and tripeptides from the small intestinal lumen. Mediates transepithelial transport of muramyl and N-formylated bacterial dipeptides contributing to recognition of pathogenic bacteria by the mucosal immune system. In Homo sapiens (Human), this protein is Solute carrier family 15 member 1.